Consider the following 296-residue polypeptide: MTDFGRVITAMITPFTADGAIAYDVAAKLAQHLVANGSDGIVVCGTTGESPTLTWEEEFQLFQTVQQAVAGKAKIIAGTGSNSTREAIDATAKAAELGLDGALLVVPYYNKPPQEGLYAHFQAIAKAVPDFPLMLYNIPGRTGQNLLPETVIRLAEYPNIVAIKEASGSLDQASTLRAALPPTFRIYAGDDSLTLPLLAVGGYGVVSVASHLVGLRIQEMIQAFVQGDTAKATAIHCQLLPLFKALFVTTNPIPIKAALSLQGWSVGEPRLPLTSASDAVISQLKAVLDDLGLLKS.

Threonine 47 is a binding site for pyruvate. Tyrosine 136 serves as the catalytic Proton donor/acceptor. Lysine 164 acts as the Schiff-base intermediate with substrate in catalysis. Pyruvate is bound at residue valine 206.

Belongs to the DapA family. In terms of assembly, homotetramer; dimer of dimers.

Its subcellular location is the cytoplasm. The catalysed reaction is L-aspartate 4-semialdehyde + pyruvate = (2S,4S)-4-hydroxy-2,3,4,5-tetrahydrodipicolinate + H2O + H(+). It functions in the pathway amino-acid biosynthesis; L-lysine biosynthesis via DAP pathway; (S)-tetrahydrodipicolinate from L-aspartate: step 3/4. In terms of biological role, catalyzes the condensation of (S)-aspartate-beta-semialdehyde [(S)-ASA] and pyruvate to 4-hydroxy-tetrahydrodipicolinate (HTPA). The protein is 4-hydroxy-tetrahydrodipicolinate synthase of Thermosynechococcus vestitus (strain NIES-2133 / IAM M-273 / BP-1).